The following is a 304-amino-acid chain: Homoserine O-acetyltransferase (304 aa).

The active-site Acyl-thioester intermediate is the cysteine 142. The substrate site is built by lysine 163 and serine 192. Histidine 235 (proton acceptor) is an active-site residue. Glutamate 237 is a catalytic residue. Residue arginine 249 participates in substrate binding.

It belongs to the MetA family.

Its subcellular location is the cytoplasm. It carries out the reaction L-homoserine + acetyl-CoA = O-acetyl-L-homoserine + CoA. It functions in the pathway amino-acid biosynthesis; L-methionine biosynthesis via de novo pathway; O-acetyl-L-homoserine from L-homoserine: step 1/1. Transfers an acetyl group from acetyl-CoA to L-homoserine, forming acetyl-L-homoserine. This chain is Homoserine O-acetyltransferase, found in Clostridium beijerinckii (strain ATCC 51743 / NCIMB 8052) (Clostridium acetobutylicum).